The primary structure comprises 731 residues: Polyadenylate-binding protein, cytoplasmic and nuclear (731 aa).

Positions 1 to 10 (MSADVSTTPA) are enriched in polar residues. Positions 1–51 (MSADVSTTPAAENVNGAAEASPAPAAAAPSATTPEVTAVENSTPAPAANQP) are disordered. The span at 17–39 (AAEASPAPAAAAPSATTPEVTAV) shows a compositional bias: low complexity. RRM domains are found at residues 54–132 (ASLY…WSQR), 142–219 (GNVF…HHIS), 235–312 (TNVY…RAQK), and 338–472 (VNLY…LAQR). Disordered stretches follow at residues 369–429 (VMRD…SDKK) and 603–665 (GGRG…NAQT). Residues 616–627 (GMRGGPGYGQGR) show a composition bias toward gly residues. Over residues 645 to 656 (QNAAAPAGPQEG) the composition is skewed to low complexity. The region spanning 658–731 (AGGVNAQTLG…MRPLAFTMST (74 aa)) is the PABC domain.

Belongs to the polyadenylate-binding protein type-1 family.

It is found in the cytoplasm. Its subcellular location is the nucleus. Binds the poly(A) tail of mRNA. Appears to be an important mediator of the multiple roles of the poly(A) tail in mRNA biogenesis, stability and translation. In the nucleus, involved in both mRNA cleavage and polyadenylation. Is also required for efficient mRNA export to the cytoplasm. Acts in concert with a poly(A)-specific nuclease (PAN) to affect poly(A) tail shortening, which may occur concomitantly with either nucleocytoplasmic mRNA transport or translational initiation. In the cytoplasm, stimulates translation initiation and regulates mRNA decay through translation termination-coupled poly(A) shortening, probably mediated by PAN. The chain is Polyadenylate-binding protein, cytoplasmic and nuclear (pab1) from Aspergillus niger (strain ATCC MYA-4892 / CBS 513.88 / FGSC A1513).